The chain runs to 290 residues: Ribosomal RNA small subunit methyltransferase A (290 aa).

6 residues coordinate S-adenosyl-L-methionine: asparagine 27, leucine 29, glycine 54, glutamate 75, aspartate 100, and asparagine 125.

This sequence belongs to the class I-like SAM-binding methyltransferase superfamily. rRNA adenine N(6)-methyltransferase family. RsmA subfamily.

It is found in the cytoplasm. It catalyses the reaction adenosine(1518)/adenosine(1519) in 16S rRNA + 4 S-adenosyl-L-methionine = N(6)-dimethyladenosine(1518)/N(6)-dimethyladenosine(1519) in 16S rRNA + 4 S-adenosyl-L-homocysteine + 4 H(+). In terms of biological role, specifically dimethylates two adjacent adenosines (A1518 and A1519) in the loop of a conserved hairpin near the 3'-end of 16S rRNA in the 30S particle. May play a critical role in biogenesis of 30S subunits. This chain is Ribosomal RNA small subunit methyltransferase A, found in Streptococcus equi subsp. zooepidemicus (strain H70).